The chain runs to 129 residues: MGRRILNDALRTIVNAERRGKASVELKPISTVMSSFLRIMKEKGYIKNFQVYDPHRVGRITVDLQGRVNDCKALTYRQDVRAKEIEKYTERTLPTRQWGYVVITTPDGILDHEEAIKRNVGGQVLGFFY.

Belongs to the universal ribosomal protein uS8 family. As to quaternary structure, component of the mitochondrial ribosome small subunit.

The protein localises to the mitochondrion. This is Small ribosomal subunit protein uS8my (RPS15AE) from Arabidopsis thaliana (Mouse-ear cress).